Reading from the N-terminus, the 539-residue chain is uncharacterized protein (539 aa).

5 consecutive transmembrane segments (helical) span residues 4-22, 27-46, 56-78, 90-112, and 155-177; these read LVENQLLALVVIMTVGLLL, IFGFRLGVAAVLFVGLALST, LIYVVGLSLFVYTIGLEAGPGFF, ALTLGAIIATTALAWALITVLNI, and PVVAYSLAYPLGVLIVILSIAIF. RCK C-terminal domains lie at 187–269 and 271–352; these read KEAE…AIGE and IDGD…LLGD. 4 helical membrane passes run 360 to 382, 422 to 444, 453 to 475, and 516 to 538; these read FNLLPLAAGLMIGVLVGMVEFPL, LALRQLGITLFLAAIGTSAGAGF, SLTIIGFGALLTLFISITVLFVG, and YTSVYPLAMIAKILAAQTLLFLL.

Belongs to the AAE transporter (TC 2.A.81) family.

The protein resides in the cell membrane. This is an uncharacterized protein from Corynebacterium glutamicum (strain ATCC 13032 / DSM 20300 / JCM 1318 / BCRC 11384 / CCUG 27702 / LMG 3730 / NBRC 12168 / NCIMB 10025 / NRRL B-2784 / 534).